Reading from the N-terminus, the 479-residue chain is Ribosomal RNA small subunit methyltransferase F (479 aa).

Residues 125 to 131 (AAAPGSK), glutamate 149, aspartate 176, and aspartate 194 contribute to the S-adenosyl-L-methionine site. Cysteine 247 functions as the Nucleophile in the catalytic mechanism.

The protein belongs to the class I-like SAM-binding methyltransferase superfamily. RsmB/NOP family.

The protein resides in the cytoplasm. It carries out the reaction cytidine(1407) in 16S rRNA + S-adenosyl-L-methionine = 5-methylcytidine(1407) in 16S rRNA + S-adenosyl-L-homocysteine + H(+). Functionally, specifically methylates the cytosine at position 1407 (m5C1407) of 16S rRNA. The sequence is that of Ribosomal RNA small subunit methyltransferase F from Shigella sonnei (strain Ss046).